A 37-amino-acid polypeptide reads, in one-letter code: Large ribosomal subunit protein bL36 (37 aa).

The protein belongs to the bacterial ribosomal protein bL36 family.

This chain is Large ribosomal subunit protein bL36, found in Salinispora tropica (strain ATCC BAA-916 / DSM 44818 / JCM 13857 / NBRC 105044 / CNB-440).